Reading from the N-terminus, the 606-residue chain is Aspartate--tRNA(Asp/Asn) ligase (606 aa).

Glu-196 is an L-aspartate binding site. Positions 220–223 (QIFK) are aspartate. An L-aspartate-binding site is contributed by Arg-242. Residues 242-244 (RDE) and Gln-251 contribute to the ATP site. L-aspartate is bound at residue His-465. Glu-499 serves as a coordination point for ATP. Arg-506 provides a ligand contact to L-aspartate. An ATP-binding site is contributed by 551–554 (GMDR).

The protein belongs to the class-II aminoacyl-tRNA synthetase family. Type 1 subfamily. Homodimer.

The protein resides in the cytoplasm. The catalysed reaction is tRNA(Asx) + L-aspartate + ATP = L-aspartyl-tRNA(Asx) + AMP + diphosphate. In terms of biological role, aspartyl-tRNA synthetase with relaxed tRNA specificity since it is able to aspartylate not only its cognate tRNA(Asp) but also tRNA(Asn). Reaction proceeds in two steps: L-aspartate is first activated by ATP to form Asp-AMP and then transferred to the acceptor end of tRNA(Asp/Asn). This is Aspartate--tRNA(Asp/Asn) ligase from Oleidesulfovibrio alaskensis (strain ATCC BAA-1058 / DSM 17464 / G20) (Desulfovibrio alaskensis).